The sequence spans 336 residues: HTH-type transcriptional repressor PurR (336 aa).

An HTH lacI-type domain is found at 2-56 (ATIKDVAKMAGVSTTTVSHVINKTRFVAKDTEEAVLSAIKQLNYSPSAVARSLKV). A DNA-binding region (H-T-H motif) is located at residues 4–23 (IKDVAKMAGVSTTTVSHVIN). Residues 48-56 (SAVARSLKV) mediate DNA binding. Tyrosine 73, lysine 188, threonine 190, phenylalanine 219, and aspartate 273 together coordinate hypoxanthine.

Homodimer.

It functions in the pathway purine metabolism; purine nucleotide biosynthesis [regulation]. In terms of biological role, is the main repressor of the genes involved in the de novo synthesis of purine nucleotides, regulating purB, purC, purEK, purF, purHD, purL, purMN and guaBA expression. PurR is allosterically activated to bind its cognate DNA by binding the purine corepressors, hypoxanthine or guanine, thereby effecting transcription repression. This chain is HTH-type transcriptional repressor PurR, found in Haemophilus influenzae (strain 86-028NP).